Reading from the N-terminus, the 626-residue chain is Chaperone protein HtpG (626 aa).

The a; substrate-binding stretch occupies residues 1–339; it reads MSQNQETRGF…SNDLPLNVSR (339 aa). The interval 340–555 is b; the sequence is EILQDNKITA…NDQMTTQMAK (216 aa). Positions 556–626 are c; it reads LFAAAGQPVP…FIKRINKLLG (71 aa).

The protein belongs to the heat shock protein 90 family. As to quaternary structure, homodimer.

It is found in the cytoplasm. Functionally, molecular chaperone. Has ATPase activity. The protein is Chaperone protein HtpG of Haemophilus influenzae (strain 86-028NP).